The primary structure comprises 102 residues: Co-chaperonin GroES (102 aa).

This sequence belongs to the GroES chaperonin family. Heptamer of 7 subunits arranged in a ring. Interacts with the chaperonin GroEL.

The protein resides in the cytoplasm. Its function is as follows. Together with the chaperonin GroEL, plays an essential role in assisting protein folding. The GroEL-GroES system forms a nano-cage that allows encapsulation of the non-native substrate proteins and provides a physical environment optimized to promote and accelerate protein folding. GroES binds to the apical surface of the GroEL ring, thereby capping the opening of the GroEL channel. The polypeptide is Co-chaperonin GroES (Chlamydia pneumoniae (Chlamydophila pneumoniae)).